Here is a 200-residue protein sequence, read N- to C-terminus: Male-specific histamine-binding salivary protein (200 aa).

The N-terminal stretch at Met-1–Ala-18 is a signal peptide. Histamine-binding residues include Ser-37, Asp-41, Asp-56, and Trp-59. 2 cysteine pairs are disulfide-bonded: Cys-65–Cys-193 and Cys-137–Cys-169. Asn-79 carries N-linked (GlcNAc...) asparagine glycosylation. Histamine contacts are provided by Glu-97, Tyr-115, Phe-125, Asp-138, Glu-154, and Trp-156.

This sequence belongs to the calycin superfamily. Histamine-binding salivary protein family. As to quaternary structure, homodimer; disulcde-linked. Post-translationally, N-glycosylated. As to expression, expressed in salivary glands.

The protein localises to the secreted. In terms of biological role, salivary tick protein that acts by scavenging histamine at the wound site, outcompeting histamine receptors for histamine, thereby overcoming host inflammatory responses. Binds histamine with a high-affinity (Kd=1.2 nM). Contains two binding histamine sites (H and L), that appear to bind histamine with differing affinities. The polypeptide is Male-specific histamine-binding salivary protein (Rhipicephalus appendiculatus (Brown ear tick)).